We begin with the raw amino-acid sequence, 307 residues long: Protein pxr1 (307 aa).

The segment covering 1 to 11 (MGLAAPRKKTK) has biased composition (basic residues). Disordered regions lie at residues 1-25 (MGLA…SRST) and 144-234 (NATA…SDCD). Over residues 15–25 (DPNNTSWSRST) the composition is skewed to polar residues. The region spanning 25-79 (TDGFGHRILKAQGWTPGGFLGARNATHSDLFTTASASHIRVVLKDDTLGLGARPK) is the G-patch domain. 2 stretches are compositionally biased toward basic and acidic residues: residues 154-168 (LRVD…HESE) and 206-221 (GKEL…EKKQ).

This sequence belongs to the PINX1 family.

The protein resides in the nucleus. Its subcellular location is the nucleolus. Functionally, involved in rRNA-processing at A0, A1 and A2 sites and negatively regulates telomerase. This is Protein pxr1 (pxr1) from Neosartorya fischeri (strain ATCC 1020 / DSM 3700 / CBS 544.65 / FGSC A1164 / JCM 1740 / NRRL 181 / WB 181) (Aspergillus fischerianus).